The primary structure comprises 458 residues: UDP-N-acetylmuramate--L-alanine ligase (458 aa).

118–124 (GTHGKTT) contributes to the ATP binding site.

The protein belongs to the MurCDEF family.

Its subcellular location is the cytoplasm. It catalyses the reaction UDP-N-acetyl-alpha-D-muramate + L-alanine + ATP = UDP-N-acetyl-alpha-D-muramoyl-L-alanine + ADP + phosphate + H(+). It participates in cell wall biogenesis; peptidoglycan biosynthesis. Functionally, cell wall formation. The sequence is that of UDP-N-acetylmuramate--L-alanine ligase from Clostridium acetobutylicum (strain ATCC 824 / DSM 792 / JCM 1419 / IAM 19013 / LMG 5710 / NBRC 13948 / NRRL B-527 / VKM B-1787 / 2291 / W).